The chain runs to 240 residues: uncharacterized protein (240 aa).

Disordered regions lie at residues 125-148 (RRLD…EDVD) and 177-240 (DESN…RKSR). The segment covering 130-148 (SSEDGEEEEENDYIDEDVD) has biased composition (acidic residues). Basic and acidic residues predominate over residues 192–203 (SPRKSHIDHDFV). Residues 204-217 (IPEDEMLSEEEEQE) show a composition bias toward acidic residues. At S231 the chain carries Phosphoserine.

The protein belongs to the UTP5 family.

It is found in the cytoplasm. It localises to the nucleus. This is an uncharacterized protein from Schizosaccharomyces pombe (strain 972 / ATCC 24843) (Fission yeast).